An 85-amino-acid chain; its full sequence is NAD(P)H-quinone oxidoreductase subunit O (85 aa).

This sequence belongs to the complex I NdhO subunit family. In terms of assembly, NDH-1 can be composed of about 15 different subunits; different subcomplexes with different compositions have been identified which probably have different functions.

Its subcellular location is the cellular thylakoid membrane. The catalysed reaction is a plastoquinone + NADH + (n+1) H(+)(in) = a plastoquinol + NAD(+) + n H(+)(out). It carries out the reaction a plastoquinone + NADPH + (n+1) H(+)(in) = a plastoquinol + NADP(+) + n H(+)(out). NDH-1 shuttles electrons from an unknown electron donor, via FMN and iron-sulfur (Fe-S) centers, to quinones in the respiratory and/or the photosynthetic chain. The immediate electron acceptor for the enzyme in this species is believed to be plastoquinone. Couples the redox reaction to proton translocation, and thus conserves the redox energy in a proton gradient. Cyanobacterial NDH-1 also plays a role in inorganic carbon-concentration. This Synechococcus sp. (strain CC9311) protein is NAD(P)H-quinone oxidoreductase subunit O.